Here is a 606-residue protein sequence, read N- to C-terminus: Aspartate--tRNA(Asp/Asn) ligase (606 aa).

Residue Glu-172 participates in L-aspartate binding. The aspartate stretch occupies residues 196–199; it reads QLFK. An L-aspartate-binding site is contributed by Arg-218. Residues 218 to 220 and Gln-227 each bind ATP; that span reads RDE. Position 448 (His-448) interacts with L-aspartate. Glu-482 contacts ATP. Arg-489 serves as a coordination point for L-aspartate. 534–537 contributes to the ATP binding site; that stretch reads GWDR.

Belongs to the class-II aminoacyl-tRNA synthetase family. Type 1 subfamily. As to quaternary structure, homodimer.

It is found in the cytoplasm. It catalyses the reaction tRNA(Asx) + L-aspartate + ATP = L-aspartyl-tRNA(Asx) + AMP + diphosphate. Functionally, aspartyl-tRNA synthetase with relaxed tRNA specificity since it is able to aspartylate not only its cognate tRNA(Asp) but also tRNA(Asn). Reaction proceeds in two steps: L-aspartate is first activated by ATP to form Asp-AMP and then transferred to the acceptor end of tRNA(Asp/Asn). This chain is Aspartate--tRNA(Asp/Asn) ligase, found in Saccharopolyspora erythraea (strain ATCC 11635 / DSM 40517 / JCM 4748 / NBRC 13426 / NCIMB 8594 / NRRL 2338).